Reading from the N-terminus, the 368-residue chain is tRNA(Met) cytidine acetate ligase (368 aa).

ATP is bound by residues 7–20 (IAEF…HKYL), Gly96, Asn152, and Arg175.

Belongs to the TmcAL family.

The protein localises to the cytoplasm. It carries out the reaction cytidine(34) in elongator tRNA(Met) + acetate + ATP = N(4)-acetylcytidine(34) in elongator tRNA(Met) + AMP + diphosphate. Catalyzes the formation of N(4)-acetylcytidine (ac(4)C) at the wobble position of elongator tRNA(Met), using acetate and ATP as substrates. First activates an acetate ion to form acetyladenylate (Ac-AMP) and then transfers the acetyl group to tRNA to form ac(4)C34. The polypeptide is tRNA(Met) cytidine acetate ligase (Streptococcus pyogenes serotype M4 (strain MGAS10750)).